The sequence spans 158 residues: Endoribonuclease YbeY (158 aa).

His-119, His-123, and Asp-129 together coordinate Zn(2+).

The protein belongs to the endoribonuclease YbeY family. Zn(2+) is required as a cofactor.

It is found in the cytoplasm. Single strand-specific metallo-endoribonuclease involved in late-stage 70S ribosome quality control and in maturation of the 3' terminus of the 16S rRNA. The protein is Endoribonuclease YbeY of Chlamydia pneumoniae (Chlamydophila pneumoniae).